Reading from the N-terminus, the 750-residue chain is uncharacterized protein (750 aa).

5 helical membrane-spanning segments follow: residues 2–22, 33–53, 79–99, 116–136, and 143–163; these read FVLL…TNVI, SLIL…DIFI, LLVL…VVSL, LSIF…TIML, and IQSL…SPIA. 2 disordered regions span residues 385–461 and 571–651; these read DNKG…KKKE and NKEF…PLTA. Basic and acidic residues predominate over residues 398-411; that stretch reads ENTKGDDNSSEKTD. Polar residues predominate over residues 412–424; the sequence is TVSVSTKLKTTAD. Over residues 425 to 436 the composition is skewed to low complexity; sequence QSESTQMSSEST. The span at 437–451 shows a compositional bias: polar residues; that stretch reads ATGISSDPQSQGKMN. The span at 452-461 shows a compositional bias: basic and acidic residues; sequence NKSEEQKKKE. A compositionally biased stretch (polar residues) spans 618–629; sequence DSKGNTATNSDT. A helical membrane pass occupies residues 724-744; the sequence is ATIVITLFLTVVLLAIAFFFF.

It to M.pneumoniae MPN_335.

The protein resides in the cell membrane. This is an uncharacterized protein from Mycoplasma pneumoniae (strain ATCC 29342 / M129 / Subtype 1) (Mycoplasmoides pneumoniae).